We begin with the raw amino-acid sequence, 623 residues long: Kelch repeat and BTB domain-containing protein 12 (623 aa).

Residues 25–92 (TDVVLVAEGV…MYSSNLPLTA (68 aa)) form the BTB domain. A BACK domain is found at 127–236 (CLGIYYYARD…GVDYLKGTMK (110 aa)). 4 Kelch repeats span residues 390–440 (NLYL…RMKG), 441–496 (RLYV…ALNG), 498–551 (IYVL…ASNA), and 557–607 (KLYV…LVAN).

The sequence is that of Kelch repeat and BTB domain-containing protein 12 (kbtbd12) from Danio rerio (Zebrafish).